The primary structure comprises 331 residues: Lactamase-like protein nscB (331 aa).

Positions 106, 108, 110, and 111 each coordinate Zn(2+). The Proton donor/acceptor role is filled by aspartate 110.

This sequence belongs to the metallo-beta-lactamase superfamily. Requires Zn(2+) as cofactor.

It functions in the pathway secondary metabolite biosynthesis. Lactamase-like protein; part of the gene cluster that mediates the biosynthesis of neosartoricin B, a prenylated anthracenone that probably exhibits T-cell antiproliferative activity, suggestive of a physiological role as an immunosuppressive agent. The non-reducing polyketide synthase nscA probably synthesizes and cyclizes the decaketide backbone. The hydrolase nscB then mediates the product release through hydrolysis followed by spontaneous decarboxylation. The prenyltransferase nscD catalyzes the addition of the dimethylallyl group to the aromatic C5. The FAD-dependent monooxygenase nscC is then responsible for the stereospecific hydroxylation at C2. Neosartoricin B can be converted into two additional compounds neosartoricins C and D. Neosartoricin C is a spirocyclic compound that is cyclized through the attack of C3 hydroxyl on C14, followed by dehydration. On the other hand, neosartoricin D is a further cyclized compound in which attack of C2 on C14 in neosartoricin C results in the formation of the acetal-containing dioxabicyclo-octanone ring. Both of these compounds are novel and possibly represent related metabolites of the gene cluster. This is Lactamase-like protein nscB from Trichophyton equinum (strain ATCC MYA-4606 / CBS 127.97) (Horse ringworm fungus).